Reading from the N-terminus, the 179-residue chain is Large ribosomal subunit protein uL6 (179 aa).

The protein belongs to the universal ribosomal protein uL6 family. Part of the 50S ribosomal subunit.

This protein binds to the 23S rRNA, and is important in its secondary structure. It is located near the subunit interface in the base of the L7/L12 stalk, and near the tRNA binding site of the peptidyltransferase center. The chain is Large ribosomal subunit protein uL6 from Gloeothece citriformis (strain PCC 7424) (Cyanothece sp. (strain PCC 7424)).